The following is an 862-amino-acid chain: C-type lectin domain-containing protein 161 (862 aa).

The signal sequence occupies residues 1–20 (MYRRTTLWFLLLFQPILVFA). Residues Asn-22 and Asn-91 are each glycosylated (N-linked (GlcNAc...) asparagine). The region spanning 41-154 (SLNACFKLYN…VGQKLPFVCT (114 aa)) is the C-type lectin 1 domain. Cys-62 and Cys-153 are oxidised to a cystine. The tract at residues 162-291 (AGPAPVHAMR…SDESSDEAYD (130 aa)) is disordered. A compositionally biased stretch (basic and acidic residues) spans 198–218 (SDKKEKKEVASDKKKESKKDE). Asn-222 carries N-linked (GlcNAc...) asparagine glycosylation. A compositionally biased stretch (basic and acidic residues) spans 242–252 (SDKKESSKKDE). Asn-258, Asn-279, and Asn-352 each carry an N-linked (GlcNAc...) asparagine glycan. A compositionally biased stretch (low complexity) spans 265–283 (ANAEMSASISASSANSSSD). Disordered regions lie at residues 377-437 (MTMR…SASL), 450-469 (ALAS…QKSA), and 474-504 (AVVS…IDES). Over residues 388-418 (SSSNTDSESASISESSQASEQAVMAAAMSAK) the composition is skewed to low complexity. 2 stretches are compositionally biased toward basic and acidic residues: residues 455 to 467 (SKSD…KDQK) and 478 to 491 (ENKH…DPKS). Asn-559 carries an N-linked (GlcNAc...) asparagine glycan. C-type lectin domains lie at 562–687 (APAL…SVLC) and 716–828 (KNGK…FVSV). Cysteines 653 and 678 form a disulfide. Asn-765 is a glycosylation site (N-linked (GlcNAc...) asparagine). The cysteines at positions 807 and 819 are disulfide-linked. N-linked (GlcNAc...) asparagine glycans are attached at residues Asn-831 and Asn-857.

The protein resides in the secreted. The sequence is that of C-type lectin domain-containing protein 161 (clec-161) from Caenorhabditis elegans.